A 242-amino-acid polypeptide reads, in one-letter code: Ribosomal RNA small subunit methyltransferase G (242 aa).

Residues glycine 78, leucine 83, 130–131 (AE), and arginine 151 contribute to the S-adenosyl-L-methionine site.

The protein belongs to the methyltransferase superfamily. RNA methyltransferase RsmG family.

It localises to the cytoplasm. Its function is as follows. Specifically methylates the N7 position of guanine in position 518 of 16S rRNA. The chain is Ribosomal RNA small subunit methyltransferase G from Salinispora tropica (strain ATCC BAA-916 / DSM 44818 / JCM 13857 / NBRC 105044 / CNB-440).